Consider the following 1448-residue polypeptide: Murinoglobulin-2 (1448 aa).

Residues 1–24 (MWKNREAQLCLFSVLLAFLPSASL) form the signal peptide. Intrachain disulfides connect C48–C86, C245–C277, and C263–C289. Residue N55 is glycosylated (N-linked (GlcNAc...) asparagine). N-linked (GlcNAc...) asparagine glycans are attached at residues N295, N315, N387, and N502. Intrachain disulfides connect C462–C556, C588–C748, and C636–C681. The tract at residues 678–709 (PTYCYDLPKEPPRKDPPRKDPEPKDTVVETIR) is bait region. Residues N751 and N846 are each glycosylated (N-linked (GlcNAc...) asparagine). Cystine bridges form between C824–C860, C898–C1295, C1056–C1101, and C1326–C1441. The segment at residues 949 to 952 (CGEQ) is a cross-link (isoglutamyl cysteine thioester (Cys-Gln)). N968 carries an N-linked (GlcNAc...) asparagine glycan. N-linked (GlcNAc...) asparagine glycosylation is found at N1114, N1285, and N1398.

Belongs to the protease inhibitor I39 (alpha-2-macroglobulin) family. Monomer.

The protein resides in the secreted. Functionally, a proteinase activates the inhibitor by specific proteolysis in the bait region, which, by an unknown mechanism leads to reaction at the cysteinyl-glutamyl internal thiol ester site and to a conformational change, whereby the proteinase is trapped and/or covalently bound to the inhibitor. While in the tetrameric proteinase inhibitors steric inhibition is sufficiently strong, monomeric forms need a covalent linkage between the activated glutamyl residue of the original thiol ester and a terminal amino group of a lysine or another nucleophilic group on the proteinase, for inhibition to be effective. This is Murinoglobulin-2 from Rattus norvegicus (Rat).